The primary structure comprises 100 residues: Putative membrane protein insertion efficiency factor (100 aa).

The tract at residues 73–100 is disordered; it reads DPVPDLPGSAPEENGRPSPDGQHSGSGG.

This sequence belongs to the UPF0161 family.

The protein localises to the cell inner membrane. In terms of biological role, could be involved in insertion of integral membrane proteins into the membrane. The chain is Putative membrane protein insertion efficiency factor from Synechococcus sp. (strain JA-3-3Ab) (Cyanobacteria bacterium Yellowstone A-Prime).